The sequence spans 404 residues: Formate-dependent phosphoribosylglycinamide formyltransferase (404 aa).

Residues E25–L26 and E85 each bind N(1)-(5-phospho-beta-D-ribosyl)glycinamide. ATP contacts are provided by residues R118, K159, S164–Q169, E199–V202, and E207. Positions R123–L318 constitute an ATP-grasp domain. Positions 277 and 289 each coordinate Mg(2+). Residues D296, K365, and R372 to R373 each bind N(1)-(5-phospho-beta-D-ribosyl)glycinamide.

It belongs to the PurK/PurT family. In terms of assembly, homodimer.

The catalysed reaction is N(1)-(5-phospho-beta-D-ribosyl)glycinamide + formate + ATP = N(2)-formyl-N(1)-(5-phospho-beta-D-ribosyl)glycinamide + ADP + phosphate + H(+). Its pathway is purine metabolism; IMP biosynthesis via de novo pathway; N(2)-formyl-N(1)-(5-phospho-D-ribosyl)glycinamide from N(1)-(5-phospho-D-ribosyl)glycinamide (formate route): step 1/1. Involved in the de novo purine biosynthesis. Catalyzes the transfer of formate to 5-phospho-ribosyl-glycinamide (GAR), producing 5-phospho-ribosyl-N-formylglycinamide (FGAR). Formate is provided by PurU via hydrolysis of 10-formyl-tetrahydrofolate. This is Formate-dependent phosphoribosylglycinamide formyltransferase from Burkholderia cenocepacia (strain HI2424).